The primary structure comprises 174 residues: Endoribonuclease YbeY (174 aa).

Residues His-124, His-128, and His-134 each coordinate Zn(2+).

This sequence belongs to the endoribonuclease YbeY family. Requires Zn(2+) as cofactor.

The protein localises to the cytoplasm. In terms of biological role, single strand-specific metallo-endoribonuclease involved in late-stage 70S ribosome quality control and in maturation of the 3' terminus of the 16S rRNA. The sequence is that of Endoribonuclease YbeY from Synechococcus elongatus (strain ATCC 33912 / PCC 7942 / FACHB-805) (Anacystis nidulans R2).